A 441-amino-acid chain; its full sequence is Velvet complex subunit B (441 aa).

In terms of domain architecture, Velvet spans 1–173 (MSTLGQGDFE…SDQGVRLRLR (173 aa)). Disordered regions lie at residues 200–220 (GYLP…PHHL), 234–295 (RSRS…ETDT), and 341–396 (MPSP…PSYA). Composition is skewed to low complexity over residues 272–283 (DGASPDSPHPSS) and 361–375 (PAGA…FSPG).

The protein belongs to the velvet family. VelB subfamily. In terms of assembly, component of the heterotrimeric velvet complex composed of laeA, veA and velB; VeA acting as a bridging protein between laeA and velB.

Its subcellular location is the nucleus. The protein localises to the cytoplasm. Component of the velvet transcription factor complex that controls sexual/asexual developmental ratio in response to light, promoting sexual development in the darkness while stimulating asexual sporulation under illumination. The velvet complex acts as a global regulator for secondary metabolite gene expression and is required for the production of chaetoglobosin A. This is Velvet complex subunit B from Chaetomium globosum (strain ATCC 6205 / CBS 148.51 / DSM 1962 / NBRC 6347 / NRRL 1970) (Soil fungus).